Reading from the N-terminus, the 302-residue chain is Quinolinate synthase (302 aa).

The iminosuccinate site is built by His-24 and Ser-41. Cys-86 provides a ligand contact to [4Fe-4S] cluster. Iminosuccinate contacts are provided by residues 112–114 (YVN) and Ser-129. Cys-171 provides a ligand contact to [4Fe-4S] cluster. Residues 197-199 (HPE) and Thr-214 each bind iminosuccinate. Cys-259 contributes to the [4Fe-4S] cluster binding site.

Belongs to the quinolinate synthase family. Type 2 subfamily. [4Fe-4S] cluster is required as a cofactor.

The protein localises to the cytoplasm. It catalyses the reaction iminosuccinate + dihydroxyacetone phosphate = quinolinate + phosphate + 2 H2O + H(+). It participates in cofactor biosynthesis; NAD(+) biosynthesis; quinolinate from iminoaspartate: step 1/1. Its function is as follows. Catalyzes the condensation of iminoaspartate with dihydroxyacetone phosphate to form quinolinate. This is Quinolinate synthase from Dehalococcoides mccartyi (strain ATCC BAA-2100 / JCM 16839 / KCTC 5957 / BAV1).